The sequence spans 259 residues: ATP synthase subunit a (259 aa).

6 consecutive transmembrane segments (helical) span residues 37-57, 101-121, 131-151, 157-177, 203-223, and 232-252; these read LSIT…FLFM, YFPA…LGLI, LVVT…LAIV, FIGF…MVPI, VLAI…LMPA, and FELF…CVYI.

The protein belongs to the ATPase A chain family. As to quaternary structure, F-type ATPases have 2 components, CF(1) - the catalytic core - and CF(0) - the membrane proton channel. CF(1) has five subunits: alpha(3), beta(3), gamma(1), delta(1), epsilon(1). CF(0) has three main subunits: a(1), b(2) and c(9-12). The alpha and beta chains form an alternating ring which encloses part of the gamma chain. CF(1) is attached to CF(0) by a central stalk formed by the gamma and epsilon chains, while a peripheral stalk is formed by the delta and b chains.

It localises to the cell inner membrane. Functionally, key component of the proton channel; it plays a direct role in the translocation of protons across the membrane. The chain is ATP synthase subunit a from Magnetococcus marinus (strain ATCC BAA-1437 / JCM 17883 / MC-1).